The chain runs to 410 residues: Serine hydroxymethyltransferase (410 aa).

(6S)-5,6,7,8-tetrahydrofolate-binding positions include Leu-119 and 123 to 125 (GHL). Residue Lys-228 is modified to N6-(pyridoxal phosphate)lysine. 351–353 (SPF) is a (6S)-5,6,7,8-tetrahydrofolate binding site.

It belongs to the SHMT family. As to quaternary structure, homodimer. Requires pyridoxal 5'-phosphate as cofactor.

The protein localises to the cytoplasm. The catalysed reaction is (6R)-5,10-methylene-5,6,7,8-tetrahydrofolate + glycine + H2O = (6S)-5,6,7,8-tetrahydrofolate + L-serine. It functions in the pathway one-carbon metabolism; tetrahydrofolate interconversion. The protein operates within amino-acid biosynthesis; glycine biosynthesis; glycine from L-serine: step 1/1. Catalyzes the reversible interconversion of serine and glycine with tetrahydrofolate (THF) serving as the one-carbon carrier. This reaction serves as the major source of one-carbon groups required for the biosynthesis of purines, thymidylate, methionine, and other important biomolecules. Also exhibits THF-independent aldolase activity toward beta-hydroxyamino acids, producing glycine and aldehydes, via a retro-aldol mechanism. This Alkaliphilus metalliredigens (strain QYMF) protein is Serine hydroxymethyltransferase.